Consider the following 349-residue polypeptide: Interleukin-10 receptor subunit beta (349 aa).

The N-terminal stretch at 1–19 is a signal peptide; sequence MAPCVAGWLGGFLLVPALG. Over 20 to 220 the chain is Extracellular; that stretch reads MIPPPEKVRM…RTGNDEITPS (201 aa). Fibronectin type-III domains lie at 23–111 and 112–215; these read PPEK…VEDT and IIGP…TGND. N-linked (GlcNAc...) asparagine glycosylation is present at Asn-49. Cys-66 and Cys-74 are joined by a disulfide. Asn-102, Asn-161, and Asn-199 each carry an N-linked (GlcNAc...) asparagine glycan. Cys-188 and Cys-209 are joined by a disulfide. The helical transmembrane segment at 221 to 241 threads the bilayer; sequence WIVAIILIVSVLVVFLFLLGC. Topologically, residues 242 to 349 are cytoplasmic; sequence FVVLWLIYKK…PKLLTSTSEV (108 aa). Ser-299 is modified (phosphoserine). A disordered region spans residues 300–349; it reads EESEGSKQSPEDNCASEPPSDPGPRELESKDEAPSPPHDDPKLLTSTSEV. Residues 322–341 show a composition bias toward basic and acidic residues; it reads GPRELESKDEAPSPPHDDPK.

Belongs to the type II cytokine receptor family. In terms of assembly, heterodimer with IFNLR1.

The protein resides in the membrane. Shared cell surface receptor required for the activation of five class 2 cytokines: IL10, IL22, IL26, IL28, and IFNL1. The IFNLR1/IL10RB dimer is a receptor for the cytokine ligands IFNL2 and IFNL3 and mediates their antiviral activity. The ligand/receptor complex stimulate the activation of the JAK/STAT signaling pathway leading to the expression of IFN-stimulated genes (ISG), which contribute to the antiviral state. The protein is Interleukin-10 receptor subunit beta (Il10rb) of Mus musculus (Mouse).